The primary structure comprises 148 residues: UPF0178 protein EF_0842 (148 aa).

Belongs to the UPF0178 family.

This is UPF0178 protein EF_0842 from Enterococcus faecalis (strain ATCC 700802 / V583).